We begin with the raw amino-acid sequence, 339 residues long: Phosphoribosylformylglycinamidine cyclo-ligase (339 aa).

It belongs to the AIR synthase family.

The protein resides in the cytoplasm. The catalysed reaction is 2-formamido-N(1)-(5-O-phospho-beta-D-ribosyl)acetamidine + ATP = 5-amino-1-(5-phospho-beta-D-ribosyl)imidazole + ADP + phosphate + H(+). It functions in the pathway purine metabolism; IMP biosynthesis via de novo pathway; 5-amino-1-(5-phospho-D-ribosyl)imidazole from N(2)-formyl-N(1)-(5-phospho-D-ribosyl)glycinamide: step 2/2. This chain is Phosphoribosylformylglycinamidine cyclo-ligase, found in Desulfitobacterium hafniense (strain DSM 10664 / DCB-2).